The sequence spans 702 residues: Dynein intermediate chain 2, ciliary (702 aa).

Residues 1–11 (MPVKSTKTKGG) are compositionally biased toward low complexity. Disordered stretches follow at residues 1 to 64 (MPVK…IKPD), 128 to 226 (DEAR…FSST), and 243 to 272 (QEKA…ETQS). Composition is skewed to basic and acidic residues over residues 36–52 (GKKD…HGGE) and 152–176 (GEEK…RDEE). The span at 189-206 (KLTNQFNFSERASQTYNN) shows a compositional bias: polar residues. Residues 243–261 (QEKAKEKKAAPSKKDDDKS) show a composition bias toward basic and acidic residues. 6 WD repeats span residues 380-420 (PTDS…ANPV), 429-472 (KHTD…LTYT), 490-533 (TQLT…QFLD), 537-577 (AHHM…GPMF), 580-620 (DLGS…YEPI), and 628-667 (KKKT…RKVP).

It belongs to the dynein intermediate chain family. Consists of at least two heavy chains (alpha and beta), three intermediate chains and several light chains.

Its subcellular location is the cytoplasm. It localises to the cytoskeleton. The protein resides in the cilium axoneme. Functionally, microtubule-binding protein that may be involved in dynein outer arm assembly on the axoneme. This is Dynein intermediate chain 2, ciliary from Heliocidaris crassispina (Sea urchin).